The chain runs to 301 residues: MSGAHTISHLSAGLKSVNIGDQQQNEANLNLLQQQLENEATSQTQQSRITQFFAQQPSDGYTLFSHRSAPNGFKVAIILSELELPFNTIFLDFNHGEQRAPEFVTINPNARVPALIDHFNDNTSIWESGAIILYLVSKYLRDNGECALWSDNIVEQSQISSWLFFQTSGHAPMIGQALHFRYFHSCPVPSAVERYTDEVRRVYGVIEMALAERREALIMDLDVENAAAYSAGTTPLSQSRYFDYPVWLVGDRATVADLSFVPWNNVVDRIGINLKVEFPEVYKWTKYMMRRPAVIRALRGD.

The region spanning 59 to 143 (DGYTLFSHRS…YLVSKYLRDN (85 aa)) is the GST N-terminal domain. The region spanning 152-301 (NIVEQSQISS…PAVIRALRGD (150 aa)) is the GST C-terminal domain.

It belongs to the GST superfamily. In terms of assembly, homodimer.

Functionally, plays an important role in the cellular response to the nitrogen source. URE2 gene plays a major part in the repression of GLN1 and GDH2 genes by glutamine, and is required for the inactivation of glutamine synthetase. URE2 gene product may catalytically inactivate GLN3 in response to an increase in the intracellular concentration of glutamine. The sequence is that of Protein URE2 (URE2) from Meyerozyma guilliermondii (strain ATCC 6260 / CBS 566 / DSM 6381 / JCM 1539 / NBRC 10279 / NRRL Y-324) (Yeast).